The sequence spans 102 residues: Large ribosomal subunit protein bL21 (102 aa).

This sequence belongs to the bacterial ribosomal protein bL21 family. In terms of assembly, part of the 50S ribosomal subunit. Contacts protein L20.

Functionally, this protein binds to 23S rRNA in the presence of protein L20. The chain is Large ribosomal subunit protein bL21 from Azorhizobium caulinodans (strain ATCC 43989 / DSM 5975 / JCM 20966 / LMG 6465 / NBRC 14845 / NCIMB 13405 / ORS 571).